The following is a 572-amino-acid chain: Bilirubin oxidase (572 aa).

The first 19 residues, 1-19 (MFKHTLGAAALSLLFNSNA), serve as a signal peptide directing secretion. Residues 20-38 (VQASPVPETSPATGHLFKR) constitute a propeptide that is removed on maturation. 2 Plastocyanin-like domains span residues 98 to 194 (VGYD…YMLT) and 404 to 526 (VAFA…VFVD). Residues His-132, His-134, His-172, His-174, His-436, His-439, His-441, His-494, Cys-495, His-496, His-500, and Met-505 each coordinate Cu cation. N-linked (GlcNAc...) asparagine glycosylation is found at Asn-510 and Asn-520.

Belongs to the multicopper oxidase family. It depends on Cu cation as a cofactor.

It catalyses the reaction 2 (4Z,15Z)-bilirubin IXalpha + O2 = 2 biliverdin IXalpha + 2 H2O. Oxidation of bilirubin and other tetrapyrroles. The sequence is that of Bilirubin oxidase from Albifimbria verrucaria (Myrothecium leaf spot and pod blight fungus).